The sequence spans 453 residues: Anthocyanidin 3-O-glucosyltransferase (453 aa).

His-17 (proton acceptor) is an active-site residue. His-17 is an an anthocyanidin binding site. The Charge relay role is filled by Asp-117. Thr-139 contacts UDP-alpha-D-glucose. His-148 contributes to the an anthocyanidin binding site. Positions 331, 333, 348, 351, 352, 353, and 356 each coordinate UDP-alpha-D-glucose. Gly-371 provides a ligand contact to an anthocyanidin. UDP-alpha-D-glucose-binding residues include Asp-372 and Gln-373.

Belongs to the UDP-glycosyltransferase family.

The enzyme catalyses an anthocyanidin + UDP-alpha-D-glucose + H(+) = an anthocyanidin 3-O-beta-D-glucoside + UDP. It carries out the reaction delphinidin + UDP-alpha-D-glucose = delphinidin 3-O-beta-D-glucoside + UDP. The catalysed reaction is pelargonidin + UDP-alpha-D-glucose = pelargonidin 3-O-beta-D-glucoside + UDP. It catalyses the reaction cyanidin + UDP-alpha-D-glucose = cyanidin 3-O-beta-D-glucoside + UDP + H(+). It functions in the pathway pigment biosynthesis; anthocyanin biosynthesis. Functionally, in the presence of other necessary color factors, this glycosylation reaction allows the accumulation of anthocyanin pigments. Anthocyanidins are the preferred substrates, while flavonols are only a minor substrate in vitro. This is Anthocyanidin 3-O-glucosyltransferase from Gentiana triflora (Clustered gentian).